The sequence spans 162 residues: Probable chemoreceptor glutamine deamidase CheD (162 aa).

Belongs to the CheD family.

It catalyses the reaction L-glutaminyl-[protein] + H2O = L-glutamyl-[protein] + NH4(+). Probably deamidates glutamine residues to glutamate on methyl-accepting chemotaxis receptors (MCPs), playing an important role in chemotaxis. This is Probable chemoreceptor glutamine deamidase CheD from Caldanaerobacter subterraneus subsp. tengcongensis (strain DSM 15242 / JCM 11007 / NBRC 100824 / MB4) (Thermoanaerobacter tengcongensis).